The primary structure comprises 363 residues: S-adenosylmethionine:tRNA ribosyltransferase-isomerase (363 aa).

This sequence belongs to the QueA family. As to quaternary structure, monomer.

The protein localises to the cytoplasm. The catalysed reaction is 7-aminomethyl-7-carbaguanosine(34) in tRNA + S-adenosyl-L-methionine = epoxyqueuosine(34) in tRNA + adenine + L-methionine + 2 H(+). The protein operates within tRNA modification; tRNA-queuosine biosynthesis. Functionally, transfers and isomerizes the ribose moiety from AdoMet to the 7-aminomethyl group of 7-deazaguanine (preQ1-tRNA) to give epoxyqueuosine (oQ-tRNA). The chain is S-adenosylmethionine:tRNA ribosyltransferase-isomerase from Brucella melitensis biotype 2 (strain ATCC 23457).